A 343-amino-acid chain; its full sequence is NADH-ubiquinone oxidoreductase chain 2 (343 aa).

Helical transmembrane passes span 1–21, 59–81, 96–116, 150–170, 178–198, 200–220, 241–261, and 270–290; these read MNPM…TMIT, YYLI…ALNT, TIIT…SWLP, NITL…LGSL, LMAF…TMAP, ISTL…LLIN, MTIL…SGFM, and LISM…LLSL.

The protein belongs to the complex I subunit 2 family.

Its subcellular location is the mitochondrion inner membrane. The enzyme catalyses a ubiquinone + NADH + 5 H(+)(in) = a ubiquinol + NAD(+) + 4 H(+)(out). Core subunit of the mitochondrial membrane respiratory chain NADH dehydrogenase (Complex I) that is believed to belong to the minimal assembly required for catalysis. Complex I functions in the transfer of electrons from NADH to the respiratory chain. The immediate electron acceptor for the enzyme is believed to be ubiquinone. This Lycodon semicarinatus (Ryukyu odd-tooth snake) protein is NADH-ubiquinone oxidoreductase chain 2 (MT-ND2).